Reading from the N-terminus, the 397-residue chain is Succinyl-diaminopimelate desuccinylase (397 aa).

Histidine 73 is a binding site for Zn(2+). Residue aspartate 75 is part of the active site. Aspartate 106 contributes to the Zn(2+) binding site. The active-site Proton acceptor is the glutamate 140. Residues glutamate 141, glutamate 169, and histidine 366 each contribute to the Zn(2+) site.

The protein belongs to the peptidase M20A family. DapE subfamily. Homodimer. Requires Zn(2+) as cofactor. Co(2+) serves as cofactor.

The enzyme catalyses N-succinyl-(2S,6S)-2,6-diaminopimelate + H2O = (2S,6S)-2,6-diaminopimelate + succinate. Its pathway is amino-acid biosynthesis; L-lysine biosynthesis via DAP pathway; LL-2,6-diaminopimelate from (S)-tetrahydrodipicolinate (succinylase route): step 3/3. In terms of biological role, catalyzes the hydrolysis of N-succinyl-L,L-diaminopimelic acid (SDAP), forming succinate and LL-2,6-diaminopimelate (DAP), an intermediate involved in the bacterial biosynthesis of lysine and meso-diaminopimelic acid, an essential component of bacterial cell walls. In Rhizobium etli (strain ATCC 51251 / DSM 11541 / JCM 21823 / NBRC 15573 / CFN 42), this protein is Succinyl-diaminopimelate desuccinylase.